Reading from the N-terminus, the 430-residue chain is Bifunctional protein GlmU (430 aa).

The interval 1-223 (MSFSVVILAA…KNEFQGVNSK (223 aa)) is pyrophosphorylase. UDP-N-acetyl-alpha-D-glucosamine is bound by residues 8–11 (LAAG), Lys22, and 81–82 (GT). A Mg(2+)-binding site is contributed by Asp102. UDP-N-acetyl-alpha-D-glucosamine contacts are provided by Gly135, Glu149, Asn164, and Asn221. Asn221 contributes to the Mg(2+) binding site. The segment at 224 to 244 (YDLANAEIVMQDRIKRHWMQQ) is linker. Positions 245–430 (GVIMRLPQTI…DFYYKFFGKN (186 aa)) are N-acetyltransferase. Residues Arg308 and Lys325 each contribute to the UDP-N-acetyl-alpha-D-glucosamine site. His336 serves as the catalytic Proton acceptor. Tyr339 and Asn350 together coordinate UDP-N-acetyl-alpha-D-glucosamine. Residues Ala353, 359–360 (NY), Ser378, Ala396, and Arg413 each bind acetyl-CoA.

The protein in the N-terminal section; belongs to the N-acetylglucosamine-1-phosphate uridyltransferase family. This sequence in the C-terminal section; belongs to the transferase hexapeptide repeat family. Homotrimer. It depends on Mg(2+) as a cofactor.

Its subcellular location is the cytoplasm. It catalyses the reaction alpha-D-glucosamine 1-phosphate + acetyl-CoA = N-acetyl-alpha-D-glucosamine 1-phosphate + CoA + H(+). The catalysed reaction is N-acetyl-alpha-D-glucosamine 1-phosphate + UTP + H(+) = UDP-N-acetyl-alpha-D-glucosamine + diphosphate. The protein operates within nucleotide-sugar biosynthesis; UDP-N-acetyl-alpha-D-glucosamine biosynthesis; N-acetyl-alpha-D-glucosamine 1-phosphate from alpha-D-glucosamine 6-phosphate (route II): step 2/2. It functions in the pathway nucleotide-sugar biosynthesis; UDP-N-acetyl-alpha-D-glucosamine biosynthesis; UDP-N-acetyl-alpha-D-glucosamine from N-acetyl-alpha-D-glucosamine 1-phosphate: step 1/1. It participates in bacterial outer membrane biogenesis; LPS lipid A biosynthesis. Catalyzes the last two sequential reactions in the de novo biosynthetic pathway for UDP-N-acetylglucosamine (UDP-GlcNAc). The C-terminal domain catalyzes the transfer of acetyl group from acetyl coenzyme A to glucosamine-1-phosphate (GlcN-1-P) to produce N-acetylglucosamine-1-phosphate (GlcNAc-1-P), which is converted into UDP-GlcNAc by the transfer of uridine 5-monophosphate (from uridine 5-triphosphate), a reaction catalyzed by the N-terminal domain. The chain is Bifunctional protein GlmU from Nitratiruptor sp. (strain SB155-2).